We begin with the raw amino-acid sequence, 830 residues long: AdoMet-dependent rRNA methyltransferase SPB1 (830 aa).

The S-adenosyl-L-methionine site is built by G58, W60, D78, D94, and D119. The Proton acceptor role is filled by K159. Residues 345 to 388 (LTEEEQIEKELQEMQQKQNLKKKREKRKQNEIKQKEITRMQMQM) are a coiled coil. Disordered regions lie at residues 485–529 (AKEA…SDSD) and 565–642 (EADL…AREV). Composition is skewed to acidic residues over residues 516-529 (VDDD…SDSD), 591-610 (VSEE…DSDF), and 618-630 (DESD…EDEA). The span at 631–642 (ERSQKEKHAREV) shows a compositional bias: basic and acidic residues.

The protein belongs to the class I-like SAM-binding methyltransferase superfamily. RNA methyltransferase RlmE family. SPB1 subfamily. In terms of assembly, component of the nucleolar and nucleoplasmic pre-60S ribosomal particle.

It localises to the nucleus. Its subcellular location is the nucleolus. The enzyme catalyses a ribonucleotide in rRNA + S-adenosyl-L-methionine = a 2'-O-methylribonucleotide in rRNA + S-adenosyl-L-homocysteine + H(+). In terms of biological role, required for proper assembly of pre-ribosomal particles during the biogenesis of the 60S ribosomal subunit. The protein is AdoMet-dependent rRNA methyltransferase SPB1 of Eremothecium gossypii (strain ATCC 10895 / CBS 109.51 / FGSC 9923 / NRRL Y-1056) (Yeast).